A 161-amino-acid polypeptide reads, in one-letter code: MSDEGDVADEAVADGAENADSRGSGGRTALVTKPVVRPQRPTGKRSRSRAAGADADVDVEEPSTAASEATGVAKDDSTTKAVSKAARAKKASKPKARSVNPIAFVYNYLKQVVAEMRKVIWPNRKQMLTYTSVVLAFLAFMVALVAGADLGLTKLVMLVFG.

Residues 1–12 (MSDEGDVADEAV) show a composition bias toward acidic residues. The segment at 1–80 (MSDEGDVADE…GVAKDDSTTK (80 aa)) is disordered. The chain crosses the membrane as a helical span at residues 133–153 (VVLAFLAFMVALVAGADLGLT).

This sequence belongs to the SecE/SEC61-gamma family. In terms of assembly, component of the Sec protein translocase complex. Heterotrimer consisting of SecY, SecE and SecG subunits. The heterotrimers can form oligomers, although 1 heterotrimer is thought to be able to translocate proteins. Interacts with the ribosome. Interacts with SecDF, and other proteins may be involved. Interacts with SecA.

It is found in the cell membrane. In terms of biological role, essential subunit of the Sec protein translocation channel SecYEG. Clamps together the 2 halves of SecY. May contact the channel plug during translocation. This Mycobacterium bovis (strain ATCC BAA-935 / AF2122/97) protein is Protein translocase subunit SecE.